The sequence spans 227 residues: Probable septum site-determining protein MinC (227 aa).

Belongs to the MinC family. As to quaternary structure, interacts with MinD and FtsZ.

Its function is as follows. Cell division inhibitor that blocks the formation of polar Z ring septums. Rapidly oscillates between the poles of the cell to destabilize FtsZ filaments that have formed before they mature into polar Z rings. Prevents FtsZ polymerization. In Acetivibrio thermocellus (strain ATCC 27405 / DSM 1237 / JCM 9322 / NBRC 103400 / NCIMB 10682 / NRRL B-4536 / VPI 7372) (Clostridium thermocellum), this protein is Probable septum site-determining protein MinC.